Consider the following 436-residue polypeptide: bZIP transcription factor RISBZ1 (436 aa).

A required for transactivation activity region spans residues 1–27 (MEHVFAVDEIPDPLWAPPPPVQPAAAA). The segment at 182–258 (LSPGPNGGSG…SARRSRSRKA (77 aa)) is disordered. Acidic residues predominate over residues 215–225 (PSEDDDMEGDA). A bZIP domain is found at 236 to 299 (EDKVKKRKES…SAAAIDNRVL (64 aa)). The interval 238-257 (KVKKRKESNRESARRSRSRK) is basic motif. A leucine-zipper region spans residues 264 to 278 (LEEQVSLLRVENSSL).

As to quaternary structure, homodimer. Forms heterodimers with RISBZ2/BZP33 and RISBZ3/BZP20. Interacts with DOF3/RPBF. In terms of tissue distribution, specifically expressed in seeds. Expressed in aleurone and subaleurone layers of maturing seeds, but not in the embryo tissues.

It is found in the nucleus. In terms of biological role, transcriptional activator that binds to the DNA specific sequence 5'-TGAGTCA-3' found in seed storage protein gene promoters. Involved in the endosperm-specific regulation of storage protein genes. Can activate the expression of genes encoding for the seed storage proteins glutelin, prolamin, globulin and the allergen RAG1. Functions synergistically with DOF3/RPBF to positively regulate quantitatively many seed storage protein genes. Functions synergistically with DOF3/RPBF to positively regulate some metabolic enzymes, such as alanine aminotransferase and pyruvate phosphate dikinase, that are expressed in developing seeds. Functions synergistically with DOF3/RPBF to positively regulate genes that are key players in the development of aleurone layers. Functions synergistically with DOF3/RPBF to positively regulate the glutelin GLUD-1 gene in endosperm of developing seeds. Can activate the expression of the bifunctional lysine-degrading enzyme, lysine ketoglutarate reductase/saccharopine dehydrogenase (LKR/SDH), one of the key regulators determining free lysine content in plants. Functions as a key regulator of starch synthesis in seeds, by direct binding to the promoters of starch-synthesizing genes, such as AGPL3, WAXXY and SBE1. The polypeptide is bZIP transcription factor RISBZ1 (Oryza sativa subsp. japonica (Rice)).